The chain runs to 153 residues: 3-hydroxyacyl-[acyl-carrier-protein] dehydratase FabZ (153 aa).

Residue H54 is part of the active site.

The protein belongs to the thioester dehydratase family. FabZ subfamily.

The protein resides in the cytoplasm. The enzyme catalyses a (3R)-hydroxyacyl-[ACP] = a (2E)-enoyl-[ACP] + H2O. Functionally, involved in unsaturated fatty acids biosynthesis. Catalyzes the dehydration of short chain beta-hydroxyacyl-ACPs and long chain saturated and unsaturated beta-hydroxyacyl-ACPs. The chain is 3-hydroxyacyl-[acyl-carrier-protein] dehydratase FabZ from Shewanella denitrificans (strain OS217 / ATCC BAA-1090 / DSM 15013).